The chain runs to 1686 residues: Gag-Pol polyprotein (1686 aa).

Residue Gly2 is the site of N-myristoyl glycine; by host attachment. 2 disordered regions span residues 110–199 and 419–486; these read RPVA…PLRA and HKRE…RPPL. The short motif at 116–119 is the PTAP/PSAP motif element; the sequence is PSAP. Pro residues predominate over residues 137–151; the sequence is PTPPPYPAALPPPLA. Positions 139-142 match the PPXY motif motif; that stretch reads PPPY. Positions 407–444 form a coiled coil; the sequence is LQDLVKEAEKVYHKRETEEERQEREKKEAEEKERRRDR. The segment covering 419–442 has biased composition (basic and acidic residues); sequence HKRETEEERQEREKKEAEEKERRR. Residues 461–476 are compositionally biased toward polar residues; that stretch reads EGSTGRQTGNLSNQAK. The CCHC-type zinc finger occupies 489 to 506; it reads DQCAYCKEKGHWARECPR. One can recognise a Peptidase A2 domain in the interval 543–613; the sequence is IEFLVDTGAE…CPAPLLGRDL (71 aa). Asp548 functions as the Protease; shared with dimeric partner in the catalytic mechanism. One can recognise a Reverse transcriptase domain in the interval 720 to 911; the sequence is LDLGVLVPCR…REVTYLGYLL (192 aa). Mg(2+)-binding residues include Asp788, Asp862, Asp863, Asp1161, Glu1199, Asp1220, and Asp1290. An RNase H type-1 domain is found at 1152 to 1298; the sequence is LPGVPTWYTD…ADEAAKQAAL (147 aa). Positions 1304-1325 are disordered; it reads AGTTKPQEPIEPAQEKTRPREL. Over residues 1316–1325 the composition is skewed to basic and acidic residues; the sequence is AQEKTRPREL. An HHCC-type zinc finger spans residues 1338–1376; it reads HQLTHLGPEKLLQLVNRTSLLIPNLQSAVREVTSQCQAC. The 159-residue stretch at 1393 to 1551 folds into the Integrase catalytic domain; sequence RGDRPGVYWE…TPYEILYGGP (159 aa). Mg(2+)-binding residues include Asp1404 and Asp1463.

The protein belongs to the retroviral Pol polyprotein family. Homohexamer; further associates as homomultimer. The virus core is composed of a lattice formed from hexagonal rings, each containing six capsid monomers. As to quaternary structure, interacts (via PPXY motif) with host NEDD4. Interacts (via PSAP motif) with host TSG101. In terms of assembly, the reverse transcriptase is a monomer (Potential). Interacts (via RNase domains) with host release factor ETF1; this interaction is essential for translational readthrough of amber codon between viral gag and pol genes, as well as for viral replication. Homodimer. Mg(2+) serves as cofactor. In terms of processing, specific enzymatic cleavages by the viral protease yield mature proteins. The protease is released by autocatalytic cleavage. The polyprotein is cleaved during and after budding, this process is termed maturation. Post-translationally, phosphorylated on serine residues.

Its subcellular location is the virion. The protein localises to the host cell membrane. The protein resides in the host late endosome membrane. It localises to the host endosome. It is found in the host multivesicular body. Its subcellular location is the host cytoplasm. It carries out the reaction DNA(n) + a 2'-deoxyribonucleoside 5'-triphosphate = DNA(n+1) + diphosphate. The enzyme catalyses Endonucleolytic cleavage to 5'-phosphomonoester.. With respect to regulation, most efficiently inhibited by Amprenavir, which is able to block Gag-Pol processing in infected cells. In terms of biological role, plays a role in budding and is processed by the viral protease during virion maturation outside the cell. During budding, it recruits, in a PPXY-dependent or independent manner, Nedd4-like ubiquitin ligases that conjugate ubiquitin molecules to Gag-Pol, or to Gag-Pol binding host factors. Interaction with HECT ubiquitin ligases probably links the viral protein to the host ESCRT pathway and facilitates release. Its function is as follows. Targets Gag and gag-pol polyproteins to the plasma membrane via a multipartite membrane binding signal, that includes its myristoylated N-terminus. Also mediates nuclear localization of the pre-integration complex. Constituent of the pre-integration complex (PIC) which tethers the latter to mitotic chromosomes. This allows the integration of the viral genome into the host DNA. Functionally, forms the spherical core of the virion that encapsulates the genomic RNA-nucleocapsid complex. In terms of biological role, involved in the packaging and encapsidation of two copies of the genome. Binds with high affinity to conserved UCUG elements within the packaging signal, located near the 5'-end of the genome. This binding is dependent on genome dimerization. Acts as a nucleic acid chaperone which is involved in rearrangement of nucleic acid secondary structures during gRNA retrotranscription. Its function is as follows. The aspartyl protease mediates proteolytic cleavages of Gag and Gag-Pol polyproteins during or shortly after the release of the virion from the plasma membrane. Cleavages take place as an ordered, step-wise cascade to yield mature proteins. This process is called maturation. Displays maximal activity during the budding process just prior to particle release from the cell. RT is a multifunctional enzyme that converts the viral dimeric RNA genome into dsDNA in the cytoplasm, shortly after virus entry into the cell. This enzyme displays a DNA polymerase activity that can copy either DNA or RNA templates, and a ribonuclease H (RNase H) activity that cleaves the RNA strand of RNA-DNA heteroduplexes in a partially processive 3' to 5' endonucleasic mode. Conversion of viral genomic RNA into dsDNA requires many steps. A tRNA binds to the primer-binding site (PBS) situated at the 5' end of the viral RNA. RT uses the 3' end of the tRNA primer to perform a short round of RNA-dependent minus-strand DNA synthesis. The reading proceeds through the U5 region and ends after the repeated (R) region which is present at both ends of viral RNA. The portion of the RNA-DNA heteroduplex is digested by the RNase H, resulting in a ssDNA product attached to the tRNA primer. This ssDNA/tRNA hybridizes with the identical R region situated at the 3' end of viral RNA. This template exchange, known as minus-strand DNA strong stop transfer, can be either intra- or intermolecular. RT uses the 3' end of this newly synthesized short ssDNA to perform the RNA-dependent minus-strand DNA synthesis of the whole template. RNase H digests the RNA template except for a polypurine tract (PPT) situated at the 5' end of the genome. It is not clear if both polymerase and RNase H activities are simultaneous. RNase H probably can proceed both in a polymerase-dependent (RNA cut into small fragments by the same RT performing DNA synthesis) and a polymerase-independent mode (cleavage of remaining RNA fragments by free RTs). Secondly, RT performs DNA-directed plus-strand DNA synthesis using the PPT that has not been removed by RNase H as primers. PPT and tRNA primers are then removed by RNase H. The 3' and 5' ssDNA PBS regions hybridize to form a circular dsDNA intermediate. Strand displacement synthesis by RT to the PBS and PPT ends produces a blunt ended, linear dsDNA copy of the viral genome that includes long terminal repeats (LTRs) at both ends. Functionally, catalyzes viral DNA integration into the host chromosome, by performing a series of DNA cutting and joining reactions. This enzyme activity takes place after virion entry into a cell and reverse transcription of the RNA genome in dsDNA. The first step in the integration process is 3' processing. This step requires a complex comprising the viral genome, matrix protein and integrase. This complex is called the pre-integration complex (PIC). The integrase protein removes 2 nucleotides from each 3' end of the viral DNA, leaving recessed CA OH's at the 3' ends. In the second step that requires cell division, the PIC enters cell nucleus. In the third step, termed strand transfer, the integrase protein joins the previously processed 3' ends to the 5' ends of strands of target cellular DNA at the site of integration. The last step is viral DNA integration into host chromosome. The protein is Gag-Pol polyprotein (pol) of Hylobatidae (gibbons).